Here is a 193-residue protein sequence, read N- to C-terminus: Fe/S biogenesis protein NfuA (193 aa).

C151 and C154 together coordinate [4Fe-4S] cluster.

Belongs to the NfuA family. Homodimer. Requires [4Fe-4S] cluster as cofactor.

Its function is as follows. Involved in iron-sulfur cluster biogenesis. Binds a 4Fe-4S cluster, can transfer this cluster to apoproteins, and thereby intervenes in the maturation of Fe/S proteins. Could also act as a scaffold/chaperone for damaged Fe/S proteins. The protein is Fe/S biogenesis protein NfuA of Buchnera aphidicola subsp. Cinara cedri (strain Cc).